We begin with the raw amino-acid sequence, 118 residues long: uncharacterized protein (118 aa).

The segment at 49 to 80 (SKEEHTTSAANLHPRKKKRMPPRRAEKNKAPN) is disordered. A compositionally biased stretch (basic residues) spans 61–70 (HPRKKKRMPP).

This is an uncharacterized protein from Saccharomyces cerevisiae (strain ATCC 204508 / S288c) (Baker's yeast).